A 1003-amino-acid polypeptide reads, in one-letter code: NACHT, LRR and PYD domains-containing protein 9B (1003 aa).

Residues 1–91 enclose the Pyrin domain; the sequence is MAGSSGYGLL…SIMAQKKKRH (91 aa). Positions 143–465 constitute an NACHT domain; the sequence is VTAIVAGTTG…QDKDICVPVI (323 aa). Position 149–156 (149–156) interacts with ATP; it reads GTTGEGKT. 7 LRR repeats span residues 749–770, 778–799, 806–826, 835–856, 863–883, 892–913, and 920–940; these read KVKH…SLCE, VLQS…HLYE, HLSL…NLLC, TLKE…EISA, NLKT…RQLC, NLEC…DLAL, and TLNS…VVLC.

In terms of assembly, sensor component of NLRP9 inflammasomes. Inflammasomes are supramolecular complexes that assemble in the cytosol in response to pathogens, such as rotavirus, but not encephalomyocarditis virus (EMCV), and play critical roles in innate immunity and inflammation. The core of NLRP9 inflammasomes consists of a signal sensor component (NLRP9), an adapter (ASC/PYCARD), which recruits an effector pro-inflammatory caspase (CASP1). Within the complex, NLRP9 and PYCARD interact via their respective DAPIN/pyrin domains. This interaction initiates speck formation (nucleation) which greatly enhances further addition of soluble PYCARD molecules to the speck in a prion-like polymerization process. Clustered PYCARD nucleates the formation of CASP1 filaments through the interaction of their respective CARD domains, acting as a platform for CASP1 polymerization. CASP1 filament formation increases local enzyme concentration, resulting in trans-autocleavage and activation. Active CASP1 then processes IL1B and IL18 precursors, leading to the release of mature cytokines in the extracellular milieu and inflammatory response. Interacts with DHX9 upon rotavirus infection; this interaction may trigger inflammasome activation and inflammatory response. As to expression, predominantly expressed in the intestine, including proximal and distal colon, cecum, ileum, jejunum and duodenum (at protein level). In the ileum, expressed in epithelial cells. Also expressed in oocytes at all follicular stages and in preimplantation embryos (at protein level). Although expression decreases in preimplantation embryos, it is still detectable in blastocyts.

Its subcellular location is the cytoplasm. The protein resides in the inflammasome. Its function is as follows. As the sensor component of the NLRP9 inflammasome, plays a crucial role in innate immunity and inflammation. In response to pathogens, including rotavirus, initiates the formation of the inflammasome polymeric complex, made of NLRP9, PYCARD and CASP1. Recruitment of proCASP1 to the inflammasome promotes its activation and CASP1-catalyzed IL1B and IL18 maturation and release in the extracellular milieu. The active cytokines stimulate inflammatory responses. Inflammasomes can also induce pyroptosis, an inflammatory form of programmed cell death. NLRP9 inflammasome activation may be initiated by DHX9 interaction with viral double-stranded RNA (dsRNA), preferentially to short dsRNA segments. The polypeptide is NACHT, LRR and PYD domains-containing protein 9B (Nlrp9b) (Mus musculus (Mouse)).